Consider the following 74-residue polypeptide: Defensin-like protein 39 (74 aa).

Positions methionine 1 to alanine 28 are cleaved as a signal peptide. 4 cysteine pairs are disulfide-bonded: cysteine 31/cysteine 74, cysteine 42/cysteine 63, cysteine 48/cysteine 68, and cysteine 52/cysteine 70.

Belongs to the DEFL family. In terms of tissue distribution, pods.

The protein resides in the secreted. Possesses antifungal activity. This Pisum sativum (Garden pea) protein is Defensin-like protein 39 (PI39).